The primary structure comprises 298 residues: GTP cyclohydrolase FolE2 (298 aa).

Belongs to the GTP cyclohydrolase IV family.

It carries out the reaction GTP + H2O = 7,8-dihydroneopterin 3'-triphosphate + formate + H(+). It functions in the pathway cofactor biosynthesis; 7,8-dihydroneopterin triphosphate biosynthesis; 7,8-dihydroneopterin triphosphate from GTP: step 1/1. Functionally, converts GTP to 7,8-dihydroneopterin triphosphate. This is GTP cyclohydrolase FolE2 from Pseudomonas fluorescens (strain Pf0-1).